Reading from the N-terminus, the 299-residue chain is Lathosterol oxidase (299 aa).

A run of 3 helical transmembrane segments spans residues 32-52 (ISLL…CATL), 79-99 (FTVK…LLEL), and 117-137 (IHLM…IYWI). The region spanning 124–252 (VSFLFFTDML…YFTLWDRIGG (129 aa)) is the Fatty acid hydroxylase domain. The Histidine box-1 signature appears at 138 to 143 (HRGLHH). The Histidine box-2 motif lies at 151–155 (HKPHH). A helical transmembrane segment spans residues 186–206 (VFPLHKVVYLGLYVLVNVWTI). The short motif at 228 to 233 (HHTDHH) is the Histidine box-3 element. Phosphoserine is present on serine 253. A disordered region spans residues 280 to 299 (FAENGCKGKKVGNGEFTKNK).

It belongs to the sterol desaturase family. Fe cation serves as cofactor.

The protein localises to the endoplasmic reticulum membrane. The catalysed reaction is a Delta(7)-sterol + 2 Fe(II)-[cytochrome b5] + O2 + 2 H(+) = a Delta(5),Delta(7)-sterol + 2 Fe(III)-[cytochrome b5] + 2 H2O. It carries out the reaction lathosterol + 2 Fe(II)-[cytochrome b5] + O2 + 2 H(+) = 7-dehydrocholesterol + 2 Fe(III)-[cytochrome b5] + 2 H2O. The enzyme catalyses 5alpha-cholesta-7,24-dien-3beta-ol + 2 Fe(II)-[cytochrome b5] + O2 + 2 H(+) = 7-dehydrodesmosterol + 2 Fe(III)-[cytochrome b5] + 2 H2O. Its pathway is steroid biosynthesis; cholesterol biosynthesis. Catalyzes the penultimate step of the biosynthesis of cholesterol, the dehydrogenation of lathosterol into 7-dehydrocholesterol (7-DHC). Cholesterol is the major sterol component in mammalian membranes and a precursor for bile acid and steroid hormone synthesis. In addition to its essential role in cholesterol biosynthesis, it also indirectly regulates ferroptosis through the production of 7-DHC. By diverting the spread of damage caused by peroxyl radicals from the phospholipid components to its sterol nucleus, 7-DHC prevents this form of cell death. The protein is Lathosterol oxidase of Mus musculus (Mouse).